Consider the following 181-residue polypeptide: NAD(P)H-quinone oxidoreductase subunit I, chloroplastic (181 aa).

4Fe-4S ferredoxin-type domains are found at residues 52 to 81 and 92 to 121; these read GRIHFEFDKCIACEVCVRVCPINLPVVDWE and KSYSIDFGVCIFCGNCVEFCPTNCLSMTEE. 8 residues coordinate [4Fe-4S] cluster: C61, C64, C67, C71, C101, C104, C107, and C111.

It belongs to the complex I 23 kDa subunit family. As to quaternary structure, NDH is composed of at least 16 different subunits, 5 of which are encoded in the nucleus. It depends on [4Fe-4S] cluster as a cofactor.

Its subcellular location is the plastid. It is found in the chloroplast thylakoid membrane. It catalyses the reaction a plastoquinone + NADH + (n+1) H(+)(in) = a plastoquinol + NAD(+) + n H(+)(out). It carries out the reaction a plastoquinone + NADPH + (n+1) H(+)(in) = a plastoquinol + NADP(+) + n H(+)(out). Functionally, NDH shuttles electrons from NAD(P)H:plastoquinone, via FMN and iron-sulfur (Fe-S) centers, to quinones in the photosynthetic chain and possibly in a chloroplast respiratory chain. The immediate electron acceptor for the enzyme in this species is believed to be plastoquinone. Couples the redox reaction to proton translocation, and thus conserves the redox energy in a proton gradient. This is NAD(P)H-quinone oxidoreductase subunit I, chloroplastic from Staurastrum punctulatum (Green alga).